We begin with the raw amino-acid sequence, 315 residues long: uncharacterized protein (315 aa).

Topologically, residues 1–38 (MDVLLSLPQPELFKTTVIPFLANRNIIKSEAILSNLHS) are cytoplasmic. Residues 39-59 (IFYVAIFYHIWFLFGKWILFP) form a helical membrane-spanning segment. Residues 60-101 (HLVKWKLDYDQKHNVKKDEKTTSERQAQHYKKKYTSLINQSS) lie on the Lumenal side of the membrane. Residues 95 to 302 (SLINQSSVHL…MVSVAAKVLK (208 aa)) enclose the TLC domain. A helical membrane pass occupies residues 102–122 (VHLISLLQSIVVLYYSLKFLL). Topologically, residues 123–144 (DPKASAEPYQTSHSRVFTENRD) are cytoplasmic. A helical transmembrane segment spans residues 145-165 (TQVICIFAIGYFVWDIYISTM). The Lumenal segment spans residues 166 to 170 (YSTFP). The helical transmembrane segment at 171–190 (FVVHGIISTVVFCIGLKPYI) threads the bilayer. At 191 to 225 (QYYAPVFLMFELSNPSLNFRWFGIKFLPQKSKFCS) the chain is on the cytoplasmic side. Residues 226–246 (LLLLLNNLTLMVVFFAARIAW) form a helical membrane-spanning segment. Residues 247–264 (GWFQIGKLCYDFYQVRNE) lie on the Lumenal side of the membrane. A helical transmembrane segment spans residues 265–285 (PGFLVFDTIVILAGNFVLDIL). Residues 286-315 (NVIWFSTMVSVAAKVLKKGESVDKVTKNEQ) lie on the Cytoplasmic side of the membrane.

Its subcellular location is the endoplasmic reticulum membrane. This is an uncharacterized protein from Saccharomyces cerevisiae (strain ATCC 204508 / S288c) (Baker's yeast).